The sequence spans 431 residues: Adenylosuccinate synthetase (431 aa).

GTP is bound by residues 12-18 (GDEGKGK) and 40-42 (GHT). The Proton acceptor role is filled by D13. Mg(2+)-binding residues include D13 and G40. Residues 13 to 16 (DEGK), 38 to 41 (NAGH), T130, R144, Q225, T240, and R304 each bind IMP. The active-site Proton donor is H41. 300-306 (STTGRPR) contacts substrate. GTP is bound by residues R306, 332 to 334 (KMD), and 414 to 416 (SIG).

The protein belongs to the adenylosuccinate synthetase family. In terms of assembly, homodimer. The cofactor is Mg(2+).

The protein localises to the cytoplasm. The catalysed reaction is IMP + L-aspartate + GTP = N(6)-(1,2-dicarboxyethyl)-AMP + GDP + phosphate + 2 H(+). It participates in purine metabolism; AMP biosynthesis via de novo pathway; AMP from IMP: step 1/2. In terms of biological role, plays an important role in the de novo pathway of purine nucleotide biosynthesis. Catalyzes the first committed step in the biosynthesis of AMP from IMP. This is Adenylosuccinate synthetase from Syntrophotalea carbinolica (strain DSM 2380 / NBRC 103641 / GraBd1) (Pelobacter carbinolicus).